We begin with the raw amino-acid sequence, 134 residues long: Ribosome-binding factor A (134 aa).

Residues 115–134 are disordered; it reads EDQRQERGEIPPGSDELQPD.

It belongs to the RbfA family. Monomer. Binds 30S ribosomal subunits, but not 50S ribosomal subunits or 70S ribosomes.

It is found in the cytoplasm. Functionally, one of several proteins that assist in the late maturation steps of the functional core of the 30S ribosomal subunit. Associates with free 30S ribosomal subunits (but not with 30S subunits that are part of 70S ribosomes or polysomes). Required for efficient processing of 16S rRNA. May interact with the 5'-terminal helix region of 16S rRNA. This Synechococcus sp. (strain CC9902) protein is Ribosome-binding factor A.